A 522-amino-acid chain; its full sequence is Calcium-dependent protein kinase 14 (522 aa).

2 stretches are compositionally biased toward low complexity: residues 1-12 and 19-45; these read MGNCCPPGSSSE and SSGSSRPAGSAGAAASPATISPSAAPA. Positions 1-58 are disordered; sequence MGNCCPPGSSSEPDPPPASSGSSRPAGSAGAAASPATISPSAAPAPAKPPAPIGPVLG. G2 carries the N-myristoyl glycine lipid modification. The region spanning 68–326 is the Protein kinase domain; it reads YTVGKELGRG…AYDVLNHPWI (259 aa). ATP contacts are provided by residues 74–82 and K97; that span reads LGRGQFGVT. Catalysis depends on D192, which acts as the Proton acceptor. An autoinhibitory domain region spans residues 332–362; it reads APDTPLDNAVLGRLKQFRAMNQFKKAALRVI. EF-hand domains lie at 369–404, 405–440, 441–476, and 480–511; these read EEIRGLKEMFKSMDSDNSGTITVDELRKGLAKKGTK, LTEAEVQQLMEAADADGNGTIDYEEFITATMHMNRM, DREEHLYTAFQYFDKDNSGYITIEELEQALREKGLM, and EIKDIISEVDADNDGRINYTEFVAMMRKGDPE. Ca(2+)-binding residues include D382, D384, S386, T388, E393, D418, D420, N422, T424, E429, D454, D456, S458, Y460, E465, D489, D491, D493, R495, and E500.

This sequence belongs to the protein kinase superfamily. Ser/Thr protein kinase family. CDPK subfamily.

It localises to the membrane. The catalysed reaction is L-seryl-[protein] + ATP = O-phospho-L-seryl-[protein] + ADP + H(+). The enzyme catalyses L-threonyl-[protein] + ATP = O-phospho-L-threonyl-[protein] + ADP + H(+). With respect to regulation, activated by calcium. Autophosphorylation may play an important role in the regulation of the kinase activity. May play a role in signal transduction pathways that involve calcium as a second messenger. This Oryza sativa subsp. japonica (Rice) protein is Calcium-dependent protein kinase 14.